Reading from the N-terminus, the 1669-residue chain is Collagen alpha-3(IV) chain (1669 aa).

Residues M1–S28 form the signal peptide. A 7S domain region spans residues K29 to A42. A triple-helical region region spans residues G43–P1436. Disordered regions lie at residues T44 to S473 and P500 to G1439. Residues P54–P68 show a composition bias toward low complexity. The segment covering P105 to P114 has biased composition (pro residues). Residue N126 is glycosylated (N-linked (GlcNAc...) asparagine). The span at P188–P200 shows a compositional bias: pro residues. Residues F202–P211 are compositionally biased toward low complexity. N253 carries N-linked (GlcNAc...) asparagine glycosylation. Residues S255 to E269 show a composition bias toward basic and acidic residues. 2 stretches are compositionally biased toward low complexity: residues P279–P290 and S382–P393. Positions P416 to C437 are enriched in pro residues. The segment covering N551–L560 has biased composition (low complexity). Composition is skewed to pro residues over residues P596–Y617 and L654–Q665. Over residues A666–G684 the composition is skewed to low complexity. Positions G778–G787 are enriched in gly residues. Positions R830–D832 match the Cell attachment site motif. Over residues C861–A876 the composition is skewed to low complexity. The span at K922 to K939 shows a compositional bias: basic and acidic residues. Residues R970–P985 are compositionally biased toward low complexity. The Cell attachment site motif lies at R994–D996. Residues S1092–S1103 are compositionally biased toward low complexity. Positions P1128–P1146 are enriched in pro residues. Residues R1152–D1154 carry the Cell attachment site motif. Low complexity predominate over residues P1228 to P1248. The segment covering E1250–P1259 has biased composition (pro residues). Positions R1304–D1306 match the Cell attachment site motif. Residues P1333 to R1343 show a composition bias toward pro residues. Composition is skewed to low complexity over residues Q1366–P1379 and P1402–N1429. The segment at G1425–R1443 is epitope recognized by Goodpasture antibodies. A Collagen IV NC1 domain is found at G1444–R1668. Cystine bridges form between C1459/C1550, C1492/C1547, C1504/C1510, C1569/C1664, C1603/C1661, and C1615/C1621. The required for the anti-angiogenic activity of tumstatin stretch occupies residues N1478–A1556. M1532 participates in a covalent cross-link: S-Lysyl-methionine sulfilimine (Met-Lys) (interchain with K-1650). The segment at A1609–S1627 is required for the anti-tumor cell activity of tumstatin. K1650 is covalently cross-linked (S-Lysyl-methionine sulfilimine (Lys-Met) (interchain with M-1532)).

It belongs to the type IV collagen family. There are six type IV collagen isoforms, alpha 1(IV)-alpha 6(IV), each of which can form a triple helix structure with 2 other chains to generate type IV collagen network. The alpha 3(IV) chain forms a triple helical protomer with alpha 4(IV) and alpha 5(IV); this triple helical structure dimerizes through NC1-NC1 domain interactions such that the alpha 3(IV), alpha 4(IV) and alpha 5(IV) chains of one protomer connect with the alpha 5(IV), alpha 4(IV) and alpha 3(IV) chains of the opposite promoter, respectively. Interacts with ITGB3. Associates with LAMB2 at the neuromuscular junction and in GBM. Prolines at the third position of the tripeptide repeating unit (G-X-Y) are hydroxylated in some or all of the chains. In terms of processing, type IV collagens contain numerous cysteine residues which are involved in inter- and intramolecular disulfide bonding. 12 of these, located in the NC1 domain, are conserved in all known type IV collagens. Post-translationally, the trimeric structure of the NC1 domains is stabilized by covalent bonds between Lys and Met residues. Phosphorylated. Thought to be phosphorylated by CERT, but CERT does not have kinase activity. In terms of tissue distribution, highly expressed in kidney and lung. Detected at lower levels in heart, muscle and skin.

It is found in the secreted. The protein localises to the extracellular space. Its subcellular location is the extracellular matrix. It localises to the basement membrane. Its function is as follows. Type IV collagen is the major structural component of glomerular basement membranes (GBM), forming a 'chicken-wire' meshwork together with laminins, proteoglycans and entactin/nidogen. In terms of biological role, tumstatin, a cleavage fragment corresponding to the collagen alpha 3(IV) NC1 domain, possesses both anti-angiogenic and anti-tumor cell activity; these two anti-tumor properties may be regulated via RGD-independent ITGB3-mediated mechanisms. The chain is Collagen alpha-3(IV) chain from Mus musculus (Mouse).